Reading from the N-terminus, the 603-residue chain is DNA ligase (603 aa).

ATP is bound at residue E262. The active-site N6-AMP-lysine intermediate is K264. The ATP site is built by R269, R285, E315, F355, R432, and K438.

The protein belongs to the ATP-dependent DNA ligase family. The cofactor is Mg(2+).

It catalyses the reaction ATP + (deoxyribonucleotide)n-3'-hydroxyl + 5'-phospho-(deoxyribonucleotide)m = (deoxyribonucleotide)n+m + AMP + diphosphate.. DNA ligase that seals nicks in double-stranded DNA during DNA replication, DNA recombination and DNA repair. The protein is DNA ligase of Caldivirga maquilingensis (strain ATCC 700844 / DSM 13496 / JCM 10307 / IC-167).